A 430-amino-acid chain; its full sequence is Histidine--tRNA ligase (430 aa).

Belongs to the class-II aminoacyl-tRNA synthetase family. As to quaternary structure, homodimer.

The protein localises to the cytoplasm. It catalyses the reaction tRNA(His) + L-histidine + ATP = L-histidyl-tRNA(His) + AMP + diphosphate + H(+). This chain is Histidine--tRNA ligase, found in Lactococcus lactis subsp. cremoris (strain SK11).